The sequence spans 660 residues: MALVTLRRNLYHLSDFRIHGALAALKTQQVNHVHKTVKEHLCPWFWSQHPGPIRVRFHHAHCKKFHSENGNDLHPVGEPGFSQVHNWDRFEHSVKNVDEQMFYRKLNSFTSSGEILRFVSTLETLPDTMMAGALHRICEVERKDGDQRLPKEILESSAFQALCDRFGRDPSDLSNAGLVTAFQALTLLCGDPQSHLLMNLEAECQHRLERGGLDVHSLCILGETLIKLHGPGCSTLDLIIYQLQGESLETFTPEDIVTVYRLLQASPEKADQQQRFLNKINHFSLSLVSNLSPKLMSQMLTALVVLDQTQALPLVIKLSKYVVRHIARFTSEELRKVLEALIYFGHSDRFFTETLEQHVASLCLTLDPELVSRVMEYCSRKLILSEPIFNAVAETFVCQAEKFSPSQTAKLIEPFGKLNYLPPNASALFRKLENMLLTRFNHFPPKTLLRLLHSCSLIESHPVNFMAKIFSPYFLQQLQGAESYLDRLSLAQLTQLFLTSILECPFYKGPKLLPKFQVKSFLTPCSSLETPMDFHLYKSVMIGLIDLLGARLYFSSKVLTPYCYTIDVEIKLDEDGFVLPFTIDEDVHKRVALCIDGPKRFCLNSKHLLGKEATKQRHLRLLGYQVVQIPYYEIEMLKSRLELVDYLQGKLFSQNSGGHW.

A mitochondrion-targeting transit peptide spans 1-57; that stretch reads MALVTLRRNLYHLSDFRIHGALAALKTQQVNHVHKTVKEHLCPWFWSQHPGPIRVRF. One can recognise an RAP domain in the interval 591–649; it reads VALCIDGPKRFCLNSKHLLGKEATKQRHLRLLGYQVVQIPYYEIEMLKSRLELVDYLQG.

Belongs to the FAST kinase family.

It is found in the mitochondrion. Functionally, required for normal mitochondrial respiration. Increases steady-state levels and half-lives of a subset of mature mitochondrial mRNAs MT-ND2, MT-ND3, MT-CYTB, MT-CO2, and MT-ATP8/6. Promotes MT-CO1 mRNA translation and increases mitochondrial complex IV assembly and activity. The protein is FAST kinase domain-containing protein 3, mitochondrial (FASTKD3) of Bos taurus (Bovine).